A 254-amino-acid polypeptide reads, in one-letter code: Ciliary microtubule associated protein 1A (254 aa).

2 STPGR repeats span residues 180–205 (PGPAAYRQTDVQVTKFKAPQYTMAAR) and 216–241 (PGPGAHSPEKVTMTRPCAPVVSFGIK). Residues 207-226 (EPPGDKTLKPGPGAHSPEKV) are disordered.

It belongs to the CIMAP family. As to quaternary structure, microtubule inner protein component of sperm flagellar doublet microtubules.

The protein localises to the cytoplasm. It localises to the cytoskeleton. It is found in the flagellum axoneme. Its function is as follows. Outer dense fibers are filamentous structures located on the outside of the axoneme in the midpiece and principal piece of the mammalian sperm tail. May help to maintain the passive elastic structures and elastic recoil of the sperm tail. This chain is Ciliary microtubule associated protein 1A (CIMAP1A), found in Bos taurus (Bovine).